Here is an 880-residue protein sequence, read N- to C-terminus: MEGGSVSDDTVTPMMAQYLEIKAQNPGAILFYRMGDFYEMFFDDAALAAEALDIALTKRGKHRGEDIAMCGVPIHAAEGYLLTLIRKGFRVAIAEQMEDPAEAKKRGSKSVVRREVVRLVTPGTLTEDTLLEARRHNYLCAFAEIRDEAALAWADISTGELSVTACPLPRLMPELARLAPRELLVADERELDWIEEVGCALTPLSRASFDSASAEKRLCALFGVGTLESFGNFTRAELSAMGALVDYLDLTQRGKLPLLRPPVRETVGGTVQIDAATRRNLEITQALAGGRDGSLLSAVDRTVTAPGARLLERRLSSPTRDLGLIHERLGAVRWLTEEPRLREEMRASLRRVPDMDRALSRLALDRAGPRDMAAIRAGLAQAQEIAQRMPAEAPALVTRALEALGGHEALVDLLDQALVAEPPLLARDGGFIAQGFDADLDETRRLRDEGRGVIASMQAGFIEVTGIQSLKIKHNNVLGYFIEVTSTHAEKMLSAPLSERFIHRQTTAGQVRFTTVELSELETRILNAGNRALDLEKMHFAALRTAILDLAGQIGRAARSLAELDLISAFADLAAIEDWTEPEIDDSRAFAIEAGRHPVVERALRRTGTPFVANHCDLSTGGTPAVWLITGPNMAGKSTFLRQNALIALLAQAGSFVPARRAHIGLVSQIFSRVGASDDLARGRSTFMVEMVETAAILNQADDRALVILDEIGRGTATWDGLSIAWATLEHLHDRNRCRALFATHYHEMTALAGKLKGVENATVAVKEWEGDVIFLHEVRRGAADRSYGVQVARLAGLPASVIERARTVLDALESGERESGGRRQTLIDDLPLFRAAPPPPAPAAPKTSPVEERLREIQPDDLSPREALKLLYDLRALLT.

An ATP-binding site is contributed by 631-638 (GPNMAGKS). The tract at residues 835 to 860 (RAAPPPPAPAAPKTSPVEERLREIQP) is disordered. Residues 850–860 (PVEERLREIQP) show a composition bias toward basic and acidic residues.

Belongs to the DNA mismatch repair MutS family.

Functionally, this protein is involved in the repair of mismatches in DNA. It is possible that it carries out the mismatch recognition step. This protein has a weak ATPase activity. The protein is DNA mismatch repair protein MutS of Cereibacter sphaeroides (strain ATCC 17029 / ATH 2.4.9) (Rhodobacter sphaeroides).